A 176-amino-acid chain; its full sequence is Cytochrome b (176 aa).

Transmembrane regions (helical) follow at residues 33-53 (FGSL…FLAM), 77-98 (WLLR…YLHV), and 113-133 (WNVG…GYVL). Residues H83 and H97 each coordinate heme b.

This sequence belongs to the cytochrome b family. As to quaternary structure, the cytochrome bc1 complex contains 11 subunits: 3 respiratory subunits (MT-CYB, CYC1 and UQCRFS1), 2 core proteins (UQCRC1 and UQCRC2) and 6 low-molecular weight proteins (UQCRH/QCR6, UQCRB/QCR7, UQCRQ/QCR8, UQCR10/QCR9, UQCR11/QCR10 and a cleavage product of UQCRFS1). This cytochrome bc1 complex then forms a dimer. Heme b serves as cofactor.

It localises to the mitochondrion inner membrane. In terms of biological role, component of the ubiquinol-cytochrome c reductase complex (complex III or cytochrome b-c1 complex) that is part of the mitochondrial respiratory chain. The b-c1 complex mediates electron transfer from ubiquinol to cytochrome c. Contributes to the generation of a proton gradient across the mitochondrial membrane that is then used for ATP synthesis. The protein is Cytochrome b (MT-CYB) of Tadarida brasiliensis (Brazilian free-tailed bat).